The sequence spans 71 residues: Small ribosomal subunit protein bS21 (71 aa).

This sequence belongs to the bacterial ribosomal protein bS21 family.

The chain is Small ribosomal subunit protein bS21 from Shewanella piezotolerans (strain WP3 / JCM 13877).